Reading from the N-terminus, the 382-residue chain is MLRWTVHLEGGPRRVNHAAVAVGHRVYSFGGYCSGEDYETLRQIDVHIFNAVSLRWTKLPPVRPAVRGQAPVVPYMRYGHSTVLIDDTVFLWGGRNDTEGACNVLYAFDVNTHKWSTPRVSGTVPGARDGHSACVLGKIMYIFGGYEQLADCFSNDIHKLDTSTMTWTLVCTKGNPARWRDFHSATMLGNHMYVFGGRADRFGPFHSNNEIYCNRIRVFDTRTEAWLDCPHTPVLPEGRRSHSAFGYNGELYIFGGYNARLNRHFHDLWKFNPGSFTWKKIEPKGKGPCPRRRQCCCIVGDKIVLFGGTSPSPEEGLGDEFDLIDHSDLHILDFSPSLKTLCKLAVIQYSLDQSCLPHDIRWELNAMTTNSNISRPIVSSHG.

5 Kelch repeats span residues 25-77 (RVYS…PYMR), 88-138 (TVFL…VLGK), 139-189 (IMYI…TMLG), 191-249 (HMYV…GYNG), and 251-301 (LYIF…IVGD).

In terms of assembly, component of a CRL2(KLHDC3) complex, also named ECS(KLHDC3) complex, composed of CUL2, Elongin BC (ELOB and ELOC), RBX1 and substrate-specific adapter KLHDC3. May form oligomers as a KLHDC3-ELOB-ELOC complex; this interaction is likely autoinhibitory for the E3 ligase complex. As to expression, expressed specifically in testis, particularly in pachytene spermatocytes.

Its subcellular location is the cytoplasm. It functions in the pathway protein modification; protein ubiquitination. Substrate-recognition component of a Cul2-RING (CRL2) E3 ubiquitin-protein ligase complex of the DesCEND (destruction via C-end degrons) pathway, which recognizes a C-degron located at the extreme C terminus of target proteins, leading to their ubiquitination and degradation. The C-degron recognized by the DesCEND pathway is usually a motif of less than ten residues and can be present in full-length proteins, truncated proteins or proteolytically cleaved forms. The CRL2(KLHDC3) complex specifically recognizes proteins with a glycine (Gly) at the C-terminus, leading to their ubiquitination and degradation: recognizes the C-terminal -Arg-(Xaa)n-Arg-Gly, -Arg-(Xaa)n-Lys-Gly, and -Arg-(Xaa)n-Gln-Gly degrons. The CRL2(KLHDC3) complex mediates ubiquitination and degradation of truncated SELENOV and SEPHS2 selenoproteins produced by failed UGA/Sec decoding, which end with a glycine. May be involved in meiotic recombination process. This chain is Kelch domain-containing protein 3, found in Mus musculus (Mouse).